We begin with the raw amino-acid sequence, 460 residues long: ATP synthase subunit beta (460 aa).

Residue 150–157 coordinates ATP; it reads GGAGVGKT.

This sequence belongs to the ATPase alpha/beta chains family. In terms of assembly, F-type ATPases have 2 components, CF(1) - the catalytic core - and CF(0) - the membrane proton channel. CF(1) has five subunits: alpha(3), beta(3), gamma(1), delta(1), epsilon(1). CF(0) has three main subunits: a(1), b(2) and c(9-12). The alpha and beta chains form an alternating ring which encloses part of the gamma chain. CF(1) is attached to CF(0) by a central stalk formed by the gamma and epsilon chains, while a peripheral stalk is formed by the delta and b chains.

The protein resides in the cell inner membrane. It catalyses the reaction ATP + H2O + 4 H(+)(in) = ADP + phosphate + 5 H(+)(out). In terms of biological role, produces ATP from ADP in the presence of a proton gradient across the membrane. The catalytic sites are hosted primarily by the beta subunits. In Salmonella agona (strain SL483), this protein is ATP synthase subunit beta.